The following is a 238-amino-acid chain: B-box zinc finger protein 25 (238 aa).

Zn(2+) is bound by residues Cys5, Cys8, Cys28, His33, Cys57, Cys60, Cys80, and His85. A B box-type 1; atypical zinc finger spans residues 5–47 (CDVCEKAPATLICCADEAALCAKCDVEVHAANKLASKHQRLFL). Residues 57–99 (CDICLEKAAFIFCVEDRALLCRDCDEATHAPNTRSANHQRFLA) form a B box-type 2; atypical zinc finger. Residues 115–139 (VEKNHFDPSNQQSLSKPPTQQPAAP) are disordered. Residues 121-137 (DPSNQQSLSKPPTQQPA) are compositionally biased toward polar residues. An interaction with COP1 region spans residues 226–238 (DDEEEHFLVPDLG).

In terms of assembly, interacts with COP1 WD40 domain. Interacts with HY5 and HYH. Post-translationally, COP1-mediated ubiquitination and subsequent proteasomal degradation of BBX25/STH occurs in the dark.

The protein localises to the nucleus. Acts as a negative regulator of seedling photomorphogenesis. BBX25/STH and BBX24/STO function as transcriptional corepressors of HY5 activity, leading to the down-regulation of BBX22 expression. BBX25/STH acts additively with BBX24/STO during de-etiolation and the hypocotyl shade avoidance response. This chain is B-box zinc finger protein 25, found in Arabidopsis thaliana (Mouse-ear cress).